The chain runs to 358 residues: Protein SRG1 (358 aa).

Residues 209–309 form the Fe2OG dioxygenase domain; the sequence is SVQSMRMNYY…RLSIATFHNV (101 aa). Fe cation-binding residues include His-233, Asp-235, and His-290.

It belongs to the iron/ascorbate-dependent oxidoreductase family. As to expression, low expression in roots and leaves.

This Arabidopsis thaliana (Mouse-ear cress) protein is Protein SRG1 (SRG1).